A 530-amino-acid polypeptide reads, in one-letter code: NVEIGTPSTTVTWTVPTAIDASAVTTVSSHNPGQSFITGTTTTVVYTATDEFGNIGQCAFTITVTATDSIDPVVTVSSGFITQQVEIGLGGVNVFYTEPTATDNSGTAVLFSRSAQPGDFFPVGQTVVTYIFQDPSGNFGTGTFTVNVVEVDTTPPVVTVPNGIITRQVEIGTSGIIVFFSEPTATDNSGTAILDSRTHQPGDVFPVGQTIVTYTFRDPAGNPATGTFTINVVEVDTTPPVITVPTPSIITRQVEVGTPGVSVFYQEPTATDNSGTAILVSRTNQPGDVFPVGQTVVTYTFQDPSGNPASATVTINVVEVDTTPPVISVPSTFITRTVELGTPGVNVFYPEPTASDNSGTAILVTRTNQPGDFFSVGQTVVTYTFQDPTGNPATATVTINIVEEDTTPPTVNCINDVIRTVELGTTSAQVFYSEPTASDVGQATLISRTAQPGDSFPVGATVVTYIFGDNAGNIADPCVFTITVNTVDTTPPTVNCVSDVVRVVELGTTSLAVVYTEPTATDISGTASLV.

HYR domains follow at residues 1–66 (NVEI…TVTA), 67–150 (TDSI…NVVE), 151–234 (VDTT…NVVE), 235–319 (VDTT…NVVE), 320–403 (VDTT…NIVE), 404–486 (EDTT…TVNT), and 487–530 (VDTT…ASLV).

Homooligomer in presence of calcium. Glycosylated.

The protein resides in the secreted. It is found in the extracellular space. It localises to the extracellular matrix. In terms of biological role, major constituent of the hyaline layer. The hyaline layer of echinoderm embryos is an extraembryonic matrix that functions as a substrate for cell adhesion through early development. The protein is Hyalin of Lytechinus variegatus (Green sea urchin).